The primary structure comprises 445 residues: C4-dicarboxylate transport protein (445 aa).

The next 8 helical transmembrane spans lie at 24–44, 62–82, 105–125, 163–183, 201–221, 237–257, 322–342, and 370–390; these read VLYI…WLSP, LIKM…IAHI, FALI…GLAA, GDIL…MALG, FGVI…AMAF, LVAL…GVIA, IYMT…LSFS, and AGTL…VFSI.

Belongs to the dicarboxylate/amino acid:cation symporter (DAACS) (TC 2.A.23) family.

The protein localises to the cell inner membrane. Responsible for the transport of dicarboxylates such as succinate, fumarate, and malate from the periplasm across the membrane. The chain is C4-dicarboxylate transport protein from Rhodopseudomonas palustris (strain HaA2).